A 271-amino-acid chain; its full sequence is Gasdermin bGSDM (271 aa).

C7 carries S-palmitoyl cysteine lipidation. 4 beta stranded membrane passes run I74 to V90, T102 to S120, R168 to L185, and A194 to F210.

Belongs to the bacterial gasdermin family. Monomer. In terms of assembly, forms large, homooligomeric ring-shaped pores when inserted in membranes. Palmitoylation helps stabilize the inactive state; may self palmitoylate. Palmitoylation plays a significant role in pore formation.

Its subcellular location is the cytoplasm. The protein resides in the cell inner membrane. With respect to regulation, the full-length protein before cleavage is inactive: intramolecular interactions between the N-terminal domain and the C-terminal region as well as the lipid modification, mediate autoinhibition. The pyroptosis-like-inducing activity is carried by the released N-terminal domain (Gasdermin bGSDM, N-terminus). Functionally, involved in defense against bacteriophages. When this probable 4 gene operon (bGSDM-FE772_23060-FE772_23065-FE772_23070) is inserted into E.coli it provides nearly 100-fold protection against phages T5 and T6 and about 8-fold against phage T4. The operon without bGSDM no longer protects against phage. Cleavage of this precursor by its dedicated protease(s) releases the active moiety (gasdermin bGSDM, N-terminus) which inserts into membranes, forming pores and triggering cell death. Pore-forming protein that causes membrane permeabilization via a pyroptosis-like activity. Makes ring-like pores when released. This Lysobacter enzymogenes protein is Gasdermin bGSDM.